Here is a 276-residue protein sequence, read N- to C-terminus: MVKGPGLYTDIGKKARDLLYKDYHSDKKFTISTYSPTGVAITSSGTKKGELFLGDVNTQLKNKNITTDIKVDTNSNLFTTITVNEPAPGVKAILSFKVPEQTSGKVELQYLHEYAGISSSVGLKANPIVNFSSVIGTNALAFGADISFDTKLGELTKSNAAVNFVKDDLIGSLTLNEKGDLLSASYYHAINPLSNTAVGVDISHRFSTKENTFTLGTQHALDPLTTVKGRVTNSGKASALIQHEWRPKSLITISSEVDTKAIEKSAKIGLSLALKP.

This sequence belongs to the eukaryotic mitochondrial porin (TC 1.B.8.1) family.

The protein localises to the plastid outer membrane. Its function is as follows. Forms a channel through the cell membrane that allows diffusion of small hydrophilic molecules. The channel adopts an open conformation at low or zero membrane potential and a closed conformation at potentials above 30-40 mV. The open state has a weak anion selectivity whereas the closed state is cation-selective. The polypeptide is Outer plastidial membrane protein porin (POR1) (Pisum sativum (Garden pea)).